A 90-amino-acid chain; its full sequence is Bombyxin G-1 (90 aa).

A signal peptide spans M1–G19. 3 disulfide bridges follow: C28-C77, C40-C90, and C76-C81. Positions N49–I67 are cleaved as a propeptide — c peptide like.

It belongs to the insulin family. As to quaternary structure, heterodimer of a B chain and an A chain linked by two disulfide bonds.

It localises to the secreted. This Bombyx mori (Silk moth) protein is Bombyxin G-1 (BBXG1).